A 502-amino-acid polypeptide reads, in one-letter code: MFGDRQRPMVLVLGLGESGLAIARWCARHGCRLRIADTREAPPNLAALQAEGIDAEFVGGPFTPALLDGGVEIVGLSPGLSPLEPALAALIAAANERAIAVWGELEFFAQALRALGTSGYQPKVLAITGTNGKTTTTNLTGLLCQRSGKKVAVAGNISPAMLDRLARAIDETALPDVWVLELSSFQLETARTFAPDAAAILNITQDHLDWHGSFDAYAAAKGRIFGATTTRVLNRDDAAVMKFAPAAGAADAARTVTFGLNEPAQQGDYGLSRDNGIAWLVEAVDRDAPDETTSRRRKRDGAHTPDIAQKRLMPADALRIRGLHNAANALAAFALARAIDLPAAPLLHALREYRGEAHRVEVIATIDDVDYVDDSKGTNVGATVAALDGLAQKIVLIAGGDGKGQDFAPLVAPVARWCRAVMLIGRDAPAIRDTLAETGVPLADHATLEAAVHAAAELAEPGDAVLLSPACASLDMFRNYAHRADVFRAAVDEIAIDKGATT.

129–135 (GTNGKTT) contributes to the ATP binding site. The interval 288–307 (APDETTSRRRKRDGAHTPDI) is disordered.

It belongs to the MurCDEF family.

Its subcellular location is the cytoplasm. The enzyme catalyses UDP-N-acetyl-alpha-D-muramoyl-L-alanine + D-glutamate + ATP = UDP-N-acetyl-alpha-D-muramoyl-L-alanyl-D-glutamate + ADP + phosphate + H(+). It participates in cell wall biogenesis; peptidoglycan biosynthesis. Cell wall formation. Catalyzes the addition of glutamate to the nucleotide precursor UDP-N-acetylmuramoyl-L-alanine (UMA). The sequence is that of UDP-N-acetylmuramoylalanine--D-glutamate ligase from Burkholderia ambifaria (strain ATCC BAA-244 / DSM 16087 / CCUG 44356 / LMG 19182 / AMMD) (Burkholderia cepacia (strain AMMD)).